The sequence spans 272 residues: 3-hydroxyanthranilate 3,4-dioxygenase (272 aa).

A domain A (catalytic) region spans residues 1 to 154 (MMEWIDENSS…SEEHKTGKPS (154 aa)). An O2-binding site is contributed by Arg38. Fe cation is bound by residues His42, Glu48, and His86. Residue Glu48 coordinates substrate. 2 residues coordinate substrate: Arg90 and Glu100. Residues 155–169 (KESSCSINVDTETEL) form a linker region. Positions 170-272 (MEPFPLKQWL…SITVDSLANK (103 aa)) are domain B.

Belongs to the 3-HAO family. It depends on Fe(2+) as a cofactor.

The protein localises to the cytoplasm. The enzyme catalyses 3-hydroxyanthranilate + O2 = (2Z,4Z)-2-amino-3-carboxymuconate 6-semialdehyde. It functions in the pathway cofactor biosynthesis; NAD(+) biosynthesis; quinolinate from L-kynurenine: step 3/3. Functionally, catalyzes the oxidative ring opening of 3-hydroxyanthranilate to 2-amino-3-carboxymuconate semialdehyde, which spontaneously cyclizes to quinolinate. The protein is 3-hydroxyanthranilate 3,4-dioxygenase of Nematostella vectensis (Starlet sea anemone).